The sequence spans 370 residues: MRFLYACFVIVLCALIFCEYVADFVVLQKCKWPEIKRKKYVDDPLRAMILADPHLLGPHRGHWLDKLYREWHMTRAFQAASRLFQPDVVFVLGDLFDEGDMVSDKQFQEYVWRYLKMFHLPPGIPLISVAGNHDVGFHYKMHPFFMSRFESYLNNSSVNLYTIKQIHFVVINSMAMEGDGCMFCTQAEDQLKNISRTLYCMKYPLEAECARTRRHPYSQPILLQHFPTYRISDTMCEEHDAPYIEAFRERFHVLSKDATDMLGELLKPRLAFAGHSHHFCHSVNRLGIDEYTVASFSWRNKVNPSFMLATITPDDYVVSKCKMLPQQFVFNSYLSAGILCLIVIGFQLRKCIQSRRQSSAVDHRKVNYLD.

The helical transmembrane segment at 7-27 threads the bilayer; sequence CFVIVLCALIFCEYVADFVVL. A divalent metal cation-binding residues include Asp-52, Asp-94, Asn-132, His-225, His-275, and His-277. A helical transmembrane segment spans residues 328–348; that stretch reads FVFNSYLSAGILCLIVIGFQL.

This sequence belongs to the metallophosphoesterase superfamily. MPPE1 family. The cofactor is Mn(2+).

It is found in the membrane. In terms of biological role, metallophosphoesterase. The protein is Metallophosphoesterase 1 homolog (PGAP5) of Drosophila melanogaster (Fruit fly).